Reading from the N-terminus, the 149-residue chain is Low molecular weight protein-tyrosine-phosphatase Wzb (149 aa).

The active-site Nucleophile is the C9. R15 is a catalytic residue. D115 acts as the Proton donor in catalysis.

Belongs to the low molecular weight phosphotyrosine protein phosphatase family.

It catalyses the reaction O-phospho-L-tyrosyl-[protein] + H2O = L-tyrosyl-[protein] + phosphate. The protein operates within glycan metabolism; exopolysaccharide biosynthesis. In terms of biological role, dephosphorylates Wzc. Required for the extracellular polysaccharide colanic acid synthesis. Probably involved in the export of colanic acid from the cell to medium. Involved in protection of cells against contact-dependent growth inhibition (CDI). This chain is Low molecular weight protein-tyrosine-phosphatase Wzb (wzb), found in Salmonella typhi.